A 276-amino-acid chain; its full sequence is NAD-capped RNA hydrolase NudC (276 aa).

R82 lines the substrate pocket. The Zn(2+) site is built by C112 and C115. E125 lines the substrate pocket. Residues C130 and C133 each coordinate Zn(2+). Y138 is a substrate binding site. The Nudix hydrolase domain maps to P139–Y262. Positions 172, 188, and 192 each coordinate a divalent metal cation. The Nudix box motif lies at G173–G194. Q206–S213 contributes to the substrate binding site. A divalent metal cation is bound at residue E233. A255 is a substrate binding site.

It belongs to the Nudix hydrolase family. NudC subfamily. Homodimer. The cofactor is Mg(2+). It depends on Mn(2+) as a cofactor. Requires Zn(2+) as cofactor.

The catalysed reaction is a 5'-end NAD(+)-phospho-ribonucleoside in mRNA + H2O = a 5'-end phospho-adenosine-phospho-ribonucleoside in mRNA + beta-nicotinamide D-ribonucleotide + 2 H(+). It carries out the reaction NAD(+) + H2O = beta-nicotinamide D-ribonucleotide + AMP + 2 H(+). The enzyme catalyses NADH + H2O = reduced beta-nicotinamide D-ribonucleotide + AMP + 2 H(+). MRNA decapping enzyme that specifically removes the nicotinamide adenine dinucleotide (NAD) cap from a subset of mRNAs by hydrolyzing the diphosphate linkage to produce nicotinamide mononucleotide (NMN) and 5' monophosphate mRNA. The NAD-cap is present at the 5'-end of some mRNAs and stabilizes RNA against 5'-processing. Has preference for mRNAs with a 5'-end purine. Catalyzes the hydrolysis of a broad range of dinucleotide pyrophosphates. The chain is NAD-capped RNA hydrolase NudC from Stutzerimonas stutzeri (strain A1501) (Pseudomonas stutzeri).